Reading from the N-terminus, the 375-residue chain is S-(hydroxymethyl)glutathione dehydrogenase (375 aa).

A Zn(2+)-binding site is contributed by Cys-40. His-41 provides a ligand contact to NAD(+). Residues His-62, Glu-63, Cys-92, Cys-95, Cys-98, Cys-106, and Cys-170 each contribute to the Zn(2+) site. NAD(+) is bound by residues 195-200, Asp-219, 293-295, and 318-320; these read GLGGIG, IGV, and TAF.

The protein belongs to the zinc-containing alcohol dehydrogenase family. Class-III subfamily. As to quaternary structure, homotetramer. It depends on Zn(2+) as a cofactor.

The catalysed reaction is a primary alcohol + NAD(+) = an aldehyde + NADH + H(+). It catalyses the reaction a secondary alcohol + NAD(+) = a ketone + NADH + H(+). It carries out the reaction S-(hydroxymethyl)glutathione + NADP(+) = S-formylglutathione + NADPH + H(+). The enzyme catalyses S-(hydroxymethyl)glutathione + NAD(+) = S-formylglutathione + NADH + H(+). The catalysed reaction is S-nitrosoglutathione + NADH + H(+) = S-(hydroxysulfenamide)glutathione + NAD(+). Functionally, oxidizes long-chain alcohols and, in the presence of glutathione, is able to oxidize formaldehyde. Also acts as a S-nitroso-glutathione reductase by catalyzing the NADH-dependent reduction of S-nitrosoglutathione, thereby regulating protein S-nitrosylation. The sequence is that of S-(hydroxymethyl)glutathione dehydrogenase (flhA) from Paracoccus denitrificans.